Here is a 295-residue protein sequence, read N- to C-terminus: MPSEKDGAKKSLMQRLALKSRIAKETLSEFLGTFIMIVLGCSSIAQAVLSRERFGGIITINIGFASAVVMALYVTFGISGGHINPAVSFAMCAFGRMEWFKFPFYVGAQFLGAFVGAATVFGIYYDGLMAFAGGKLLVVGENATAFIFATYPAPFISTPGAFVDQVVSTMFLLLIVFAMFDSRNLGVPRGLEPVVIGLLIIVLSCSLGLNSGCAMNPARDLSPRLFTALAGWGFEVFTVGNNFWWIPVVGPMIGAFLGGLIYILFIQMHHSKLDPDMKAEPSENNLEKHELSVIM.

At 1 to 24 the chain is on the cytoplasmic side; sequence MPSEKDGAKKSLMQRLALKSRIAK. Residues 25–43 form a helical membrane-spanning segment; the sequence is ETLSEFLGTFIMIVLGCSS. Over 44 to 57 the chain is Extracellular; sequence IAQAVLSRERFGGI. The helical transmembrane segment at 58–77 threads the bilayer; the sequence is ITINIGFASAVVMALYVTFG. Topologically, residues 78–79 are cytoplasmic; sequence IS. The segment at residues 80–92 is an intramembrane region (discontinuously helical); it reads GGHINPAVSFAMC. Positions 84–86 match the NPA 1 motif; sequence NPA. Topologically, residues 93–98 are cytoplasmic; the sequence is AFGRME. A helical membrane pass occupies residues 99-123; the sequence is WFKFPFYVGAQFLGAFVGAATVFGI. The Extracellular portion of the chain corresponds to 124-160; it reads YYDGLMAFAGGKLLVVGENATAFIFATYPAPFISTPG. A helical transmembrane segment spans residues 161 to 178; the sequence is AFVDQVVSTMFLLLIVFA. At 179-190 the chain is on the cytoplasmic side; that stretch reads MFDSRNLGVPRG. Residues 191–207 traverse the membrane as a helical segment; it reads LEPVVIGLLIIVLSCSL. The Extracellular portion of the chain corresponds to 208–210; it reads GLN. Positions 211–225 form an intramembrane region, discontinuously helical; that stretch reads SGCAMNPARDLSPRL. Residues 216 to 218 carry the NPA 2 motif; that stretch reads NPA. Topologically, residues 226 to 243 are extracellular; that stretch reads FTALAGWGFEVFTVGNNF. The chain crosses the membrane as a helical span at residues 244-264; that stretch reads WWIPVVGPMIGAFLGGLIYIL. The Cytoplasmic portion of the chain corresponds to 265 to 295; the sequence is FIQMHHSKLDPDMKAEPSENNLEKHELSVIM.

It belongs to the MIP/aquaporin (TC 1.A.8) family. Homotetramer; each monomer provides an independent glycerol/water pore. As to expression, detected in testis and liver. Detected in immature spermatocytes and in interstitial Leydig cells.

The protein localises to the cell membrane. It is found in the basolateral cell membrane. It carries out the reaction H2O(in) = H2O(out). The enzyme catalyses glycerol(in) = glycerol(out). It catalyses the reaction urea(in) = urea(out). The catalysed reaction is (S)-lactate(in) = (S)-lactate(out). It carries out the reaction NH4(+)(in) = NH4(+)(out). The enzyme catalyses uracil(in) = uracil(out). It catalyses the reaction adenine(out) = adenine(in). The catalysed reaction is 3-hydroxybutanoate(in) = 3-hydroxybutanoate(out). It carries out the reaction D-sorbitol(in) = D-sorbitol(out). The enzyme catalyses D-mannitol(in) = D-mannitol(out). It catalyses the reaction H2O2(out) = H2O2(in). The catalysed reaction is arsenite(in) = arsenite(out). It carries out the reaction selenite(in) = selenite(out). Its activity is regulated as follows. Channel activity is inhibited by mercury ions and phloretin. Its function is as follows. Aquaglyceroporins form homotetrameric transmembrane channels, with each monomer independently mediating glycerol and water transport across the plasma membrane along their osmotic gradient. AQP9 is the primary route for glycerol uptake in hepatocytes, supporting hepatic gluconeogenesis. It exhibits broad specificity and may transport various small, non-charged solutes, including carbamides, polyols, purines, and pyrimidines. AQP9 may also facilitate hepatic urea extrusion. Due to its permeability to lactate, AQP9 might participate in the astrocyte-to-neuron lactate shuttle, supplying neurons with energy. Additionally, AQP9 is permeable to arsenite, contributing to arsenic excretion by the liver and providing partial protection against arsenic toxicity. It is also permeable to H2O2 in vivo. Could also be permeable to ammonium. This chain is Aquaporin-9, found in Rattus norvegicus (Rat).